The chain runs to 154 residues: Cytochrome c-type biogenesis protein CcmE (154 aa).

Residues 1–8 (MHPQRKQR) lie on the Cytoplasmic side of the membrane. The helical; Signal-anchor for type II membrane protein transmembrane segment at 9 to 29 (LMIVLFIVVFSSLAVGLIAYA) threads the bilayer. At 30–154 (LRENINLFYP…ATCGGLNYGA (125 aa)) the chain is on the periplasmic side. Residues His124 and Tyr128 each contribute to the heme site.

The protein belongs to the CcmE/CycJ family.

It localises to the cell inner membrane. Its function is as follows. Heme chaperone required for the biogenesis of c-type cytochromes. Transiently binds heme delivered by CcmC and transfers the heme to apo-cytochromes in a process facilitated by CcmF and CcmH. The chain is Cytochrome c-type biogenesis protein CcmE from Cellvibrio japonicus (strain Ueda107) (Pseudomonas fluorescens subsp. cellulosa).